A 330-amino-acid chain; its full sequence is PDZ and LIM domain protein 4 (330 aa).

A PDZ domain is found at 1–84; it reads MPHSVTLRGP…HLTLSVSRPE (84 aa). The tract at residues 104–180 is disordered; the sequence is IDPEIQDGSP…DPARGLPRSR (77 aa). Positions 111 to 121 are enriched in low complexity; the sequence is GSPTTSRRPSG. Phosphoserine is present on residues Ser-112, Ser-116, Ser-120, and Ser-135. The segment covering 148–163 has biased composition (polar residues); the sequence is NGSSEATLPAQMSTLH. The LIM zinc-binding domain maps to 253–312; sequence PECTRCGHGIVGTIVKARDKLYHPECFMCSDCGLNLKQRGYFFLDERLYCESHAKARVKP.

As to quaternary structure, homodimer. Interacts with PTPN13. Interacts (via C-terminus only or via combined C-terminus and LIM domain, but not LIM domain only) with PTPN13 (via the second or fourth PDZ domains). Found in a complex with PTPN13 and TRIP6. Interacts (via PDZ domain) with ACTN1 and ACTN2 (via C-terminal SDL residues). Interacts (via PDZ domain) with TRIP6 (via the second LIM domain or via the third LIM domain plus C-terminus). Interacts (via LIM domain) with GRIA1 (via C-terminus); this interaction as well as the interaction with alpha-actinin is required for their colocalization in early endosomes. Interacts with PDLIM1. Forms (via LIM domain) a heterodimer with PDLIM3. Interacts directly with SRC (via kinase domain and to a lesser extent the SH2 domain). Isoform 2 interacts with NQO1. NQO1-stabilized isoform 2 heterodimerizes with isoform 1. In terms of processing, phosphorylated on tyrosine residue(s). Can be dephosphorylated by PTPN13. In terms of tissue distribution, found in brain.

It is found in the cytoplasm. The protein localises to the cytoskeleton. It localises to the nucleus. Its subcellular location is the perinuclear region. The protein resides in the cell projection. It is found in the lamellipodium. The protein localises to the dendritic spine. It localises to the early endosome membrane. Its subcellular location is the recycling endosome membrane. The protein resides in the synapse. It is found in the synaptosome. Functionally, suppresses SRC activation by recognizing and binding to active SRC and facilitating PTPN13-mediated dephosphorylation of SRC 'Tyr-419' leading to its inactivation. Inactivated SRC dissociates from this protein allowing the initiation of a new SRC inactivation cycle. Involved in reorganization of the actin cytoskeleton. In nonmuscle cells, binds to ACTN1 (alpha-actinin-1), increases the affinity of ACTN1 to F-actin (filamentous actin), and promotes formation of actin stress fibers. Involved in regulation of the synaptic AMPA receptor transport in dendritic spines of hippocampal pyramidal neurons directing the receptors toward an insertion at the postsynaptic membrane. Links endosomal surface-internalized GRIA1-containing AMPA receptors to the alpha-actinin/actin cytoskeleton. Increases AMPA receptor-mediated excitatory postsynaptic currents in neurons. Involved in reorganization of the actin cytoskeleton and in regulation of cell migration. In response to oxidative stress, binds to NQO1, which stabilizes it and protects it from ubiquitin-independent degradation by the core 20S proteasome. Stabilized protein is able to heterodimerize with isoform 1 changing the subcellular location of it from cytoskeleton and nuclei to cytosol, leading to loss of isoforms 1 ability to induce formation of actin stress fibers. Counteracts the effects produced by isoform 1 on organization of actin cytoskeleton and cell motility to fine-tune actin cytoskeleton rearrangement and to attenuate cell migration. This chain is PDZ and LIM domain protein 4 (PDLIM4), found in Homo sapiens (Human).